A 342-amino-acid polypeptide reads, in one-letter code: tRNA-specific 2-thiouridylase MnmA (342 aa).

ATP contacts are provided by residues 6-13 (GMSGGVDS) and Leu-32. Cys-99 serves as the catalytic Nucleophile. Cys-99 and Cys-190 are disulfide-bonded. Gly-124 is an ATP binding site. The interaction with tRNA stretch occupies residues 140–142 (KDQ). Residue Cys-190 is the Cysteine persulfide intermediate of the active site. The tract at residues 292–293 (RY) is interaction with tRNA.

The protein belongs to the MnmA/TRMU family.

It is found in the cytoplasm. It catalyses the reaction S-sulfanyl-L-cysteinyl-[protein] + uridine(34) in tRNA + AH2 + ATP = 2-thiouridine(34) in tRNA + L-cysteinyl-[protein] + A + AMP + diphosphate + H(+). In terms of biological role, catalyzes the 2-thiolation of uridine at the wobble position (U34) of tRNA, leading to the formation of s(2)U34. The protein is tRNA-specific 2-thiouridylase MnmA of Hydrogenobaculum sp. (strain Y04AAS1).